Reading from the N-terminus, the 75-residue chain is Exodeoxyribonuclease 7 small subunit (75 aa).

This sequence belongs to the XseB family. Heterooligomer composed of large and small subunits.

It is found in the cytoplasm. It catalyses the reaction Exonucleolytic cleavage in either 5'- to 3'- or 3'- to 5'-direction to yield nucleoside 5'-phosphates.. In terms of biological role, bidirectionally degrades single-stranded DNA into large acid-insoluble oligonucleotides, which are then degraded further into small acid-soluble oligonucleotides. The polypeptide is Exodeoxyribonuclease 7 small subunit (Listeria monocytogenes serotype 4b (strain CLIP80459)).